The chain runs to 341 residues: MSSELEALRQETEQLKNQIREARKAAADTTLNQAAVNVEQVGRIQMRTRRTLRGHLAKIYAMHWASDSRNLVSASQDGKLIVWDGYTTNKVHAIPLRSSWVMTCAYAPSGSYVACGGLDNICSIYSLKTREGNVRVSRELPGHTGYLSCCRFLDDNQIVTSSGDMSCALWDIETGQQTTAFTGHTGDVMSLSLSPDMRTFVSGACDASAKLWDIRDGMCKQTFSGHESDINAITYFPNGYAFATGSDDATCRLFDIRADQEIGMYSHDNIICGITSVAFSKSGRLLLGGYDDFNCNVWDVLRQERAGVLAGHDNRVSCLGVTEDGMAVATGSWDSFLRIWN.

7 WD repeats span residues 54–93 (GHLAKIYAMHWASDSRNLVSASQDGKLIVWDGYTTNKVHA), 96–135 (LRSSWVMTCAYAPSGSYVACGGLDNICSIYSLKTREGNVR), 142–180 (GHTGYLSCCRFLDDNQIVTSSGDMSCALWDIETGQQTTA), 183–222 (GHTGDVMSLSLSPDMRTFVSGACDASAKLWDIRDGMCKQT), 225–264 (GHESDINAITYFPNGYAFATGSDDATCRLFDIRADQEIGM), 269–308 (NIICGITSVAFSKSGRLLLGGYDDFNCNVWDVLRQERAGV), and 311–341 (GHDNRVSCLGVTEDGMAVATGSWDSFLRIWN).

This sequence belongs to the WD repeat G protein beta family. G proteins are composed of 3 units, alpha, beta and gamma. The G protein beta1-gamma2 dimer interacts with calmodulin. In terms of tissue distribution, abundantly expressed in gills, gonad and mantle and at lower levels in digestion gland. Not detected in muscle.

The protein localises to the cytoplasm. In terms of biological role, guanine nucleotide-binding proteins (G proteins) are involved as a modulator or transducer in various transmembrane signaling systems. The beta and gamma chains are required for the GTPase activity, for replacement of GDP by GTP, and for G protein-effector interaction. This is Guanine nucleotide-binding protein subunit beta from Pinctada fucata (Akoya pearl oyster).